The chain runs to 598 residues: Urease subunit alpha (598 aa).

The 463-residue stretch at 136-598 folds into the Urease domain; the sequence is GGLDTHVHWL…APLAQRYFLF (463 aa). Ni(2+) is bound by residues H141, H143, and K223. K223 is subject to N6-carboxylysine. Residue H225 participates in substrate binding. Positions 252 and 278 each coordinate Ni(2+). Residue H326 is the Proton donor of the active site. Ni(2+) is bound at residue D366.

Belongs to the metallo-dependent hydrolases superfamily. Urease alpha subunit family. As to quaternary structure, heterotrimer of UreA (gamma), UreB (beta) and UreC (alpha) subunits. Three heterotrimers associate to form the active enzyme. Requires Ni cation as cofactor. In terms of processing, carboxylation allows a single lysine to coordinate two nickel ions.

The protein resides in the cytoplasm. It catalyses the reaction urea + 2 H2O + H(+) = hydrogencarbonate + 2 NH4(+). Its pathway is nitrogen metabolism; urea degradation; CO(2) and NH(3) from urea (urease route): step 1/1. The protein is Urease subunit alpha of Ureaplasma urealyticum serovar 10 (strain ATCC 33699 / Western).